The following is a 1097-amino-acid chain: Protease Do-like 7 (1097 aa).

The interval 55–243 (VLRTTACRAF…LPLQRVVRAL (189 aa)) is serine protease. Residues 269–366 (MTFLHKGFDE…RGGQPLSVSV (98 aa)) form the PDZ domain. The Charge relay system role is filled by His524. Residues 546–556 (TSSGDGSQNDF) are compositionally biased toward polar residues. Residues 546–577 (TSSGDGSQNDFGSEAKKQRVDEDSSDGIAANG) form a disordered region. Basic and acidic residues predominate over residues 558–567 (SEAKKQRVDE). The Charge relay system role is filled by Ser785.

Belongs to the peptidase S1C family.

The protein localises to the cytoplasm. Functionally, probable serine protease. The protein is Protease Do-like 7 (DEGP7) of Arabidopsis thaliana (Mouse-ear cress).